A 402-amino-acid polypeptide reads, in one-letter code: Phosphoglycerate kinase (402 aa).

Substrate contacts are provided by residues 24–26 (DFN), R41, 64–67 (HMGR), R123, and R156. ATP-binding positions include K207, G298, E329, and 358–361 (GGDS).

It belongs to the phosphoglycerate kinase family. In terms of assembly, monomer.

The protein localises to the cytoplasm. It carries out the reaction (2R)-3-phosphoglycerate + ATP = (2R)-3-phospho-glyceroyl phosphate + ADP. The protein operates within carbohydrate degradation; glycolysis; pyruvate from D-glyceraldehyde 3-phosphate: step 2/5. This Microcystis aeruginosa (strain NIES-843 / IAM M-2473) protein is Phosphoglycerate kinase.